The sequence spans 221 residues: Serine/arginine-rich splicing factor 2 (221 aa).

In terms of domain architecture, RRM spans 14-92 (TSLKVDNLTY…RELRVQMARY (79 aa)). The tract at residues 91–221 (RYGRPPDSHH…SPEEEGAVSS (131 aa)) is disordered. 2 stretches are compositionally biased toward basic residues: residues 117–171 (RRSR…RSKS) and 179–189 (SRSRSRSRSRS).

It belongs to the splicing factor SR family. Extensively phosphorylated on serine residues in the RS domain.

It localises to the nucleus. In terms of biological role, necessary for the splicing of pre-mRNA. It is required for formation of the earliest ATP-dependent splicing complex and interacts with spliceosomal components bound to both the 5'- and 3'-splice sites during spliceosome assembly. It also is required for ATP-dependent interactions of both U1 and U2 snRNPs with pre-mRNA. This Gallus gallus (Chicken) protein is Serine/arginine-rich splicing factor 2 (SRSF2).